A 418-amino-acid chain; its full sequence is Protease LasA (418 aa).

An N-terminal signal peptide occupies residues 1–31 (MQHKRSRAMASPRSPFLFVLLALAVGGTANA). Residues 32 to 236 (HDDGLPAFRY…ARQLQAKAAL (205 aa)) constitute a propeptide that is removed on maturation. Residues histidine 259 and aspartate 272 each contribute to the Zn(2+) site. A disulfide bridge connects residues cysteine 301 and cysteine 347. Residues histidine 317 and histidine 356 each act as proton donor/acceptor in the active site. Histidine 358 contacts Zn(2+). Residues cysteine 391 and cysteine 406 are joined by a disulfide bond.

The protein belongs to the peptidase M23A family. Zn(2+) serves as cofactor. Processing of pro-LasA can occur extracellularly and requires elastase (lasB). Secretion and processing may be linked.

It localises to the secreted. Its function is as follows. Involved in proteolysis and elastolysis (degradation of the host protein elastin). Has staphylolytic activity (degrades pentaglycine cross-links in cell wall peptidoglycan), preferring Gly-Gly-|-X substrates where X is Ala or Gly. Enhances the elastolytic but not proteolytic activity of elastase (lasB) and elastolytic activity of other proteases. Degradation of host elastin is likely to contribute to the pathogenicity of P.aeruginosa. While either His-317 or His-356 can abstract a proton in the hydrolysis reaction, the same residue performs both functions in a given catalytic cycle, with the other stabilizing the catalytic intermediate. The sequence is that of Protease LasA (lasA) from Pseudomonas aeruginosa (strain ATCC 15692 / DSM 22644 / CIP 104116 / JCM 14847 / LMG 12228 / 1C / PRS 101 / PAO1).